The sequence spans 193 residues: dCTP deaminase (193 aa).

DCTP is bound by residues 110–115, Asp-128, 136–138, Tyr-171, Lys-178, and Gln-182; these read RSSLAR and VLE. Glu-138 functions as the Proton donor/acceptor in the catalytic mechanism. Positions 169–193 are disordered; that stretch reads RPYNRRQDAKYKDQQGAVASRIDKD.

The protein belongs to the dCTP deaminase family. As to quaternary structure, homotrimer.

The enzyme catalyses dCTP + H2O + H(+) = dUTP + NH4(+). Its pathway is pyrimidine metabolism; dUMP biosynthesis; dUMP from dCTP (dUTP route): step 1/2. Functionally, catalyzes the deamination of dCTP to dUTP. The protein is dCTP deaminase of Pectobacterium carotovorum subsp. carotovorum (strain PC1).